The following is a 150-amino-acid chain: Large ribosomal subunit protein uL22c (150 aa).

It belongs to the universal ribosomal protein uL22 family. Part of the 50S ribosomal subunit.

It is found in the plastid. It localises to the chloroplast. This protein binds specifically to 23S rRNA. In terms of biological role, the globular domain of the protein is located near the polypeptide exit tunnel on the outside of the subunit, while an extended beta-hairpin is found that lines the wall of the exit tunnel in the center of the 70S ribosome. This is Large ribosomal subunit protein uL22c (rpl22) from Fagopyrum esculentum subsp. ancestrale (Wild buckwheat).